A 130-amino-acid polypeptide reads, in one-letter code: Arginine decarboxylase proenzyme (130 aa).

The active-site Schiff-base intermediate with substrate; via pyruvic acid is the Ser-78. Ser-78 is subject to Pyruvic acid (Ser); by autocatalysis. His-83 functions as the Proton acceptor; for processing activity in the catalytic mechanism. Cys-98 functions as the Proton donor; for catalytic activity in the catalytic mechanism.

It belongs to the prokaryotic AdoMetDC family. Type 1 subfamily. As to quaternary structure, heterooctamer of four alpha and four beta chains arranged as a tetramer of alpha/beta heterodimers. The cofactor is pyruvate. Post-translationally, is synthesized initially as an inactive proenzyme. Formation of the active enzyme involves a self-maturation process in which the active site pyruvoyl group is generated from an internal serine residue via an autocatalytic post-translational modification. Two non-identical subunits are generated from the proenzyme in this reaction, and the pyruvate is formed at the N-terminus of the alpha chain, which is derived from the carboxyl end of the proenzyme. The post-translation cleavage follows an unusual pathway, termed non-hydrolytic serinolysis, in which the side chain hydroxyl group of the serine supplies its oxygen atom to form the C-terminus of the beta chain, while the remainder of the serine residue undergoes an oxidative deamination to produce ammonia and the pyruvoyl group blocking the N-terminus of the alpha chain.

It catalyses the reaction L-arginine + H(+) = agmatine + CO2. It participates in amine and polyamine biosynthesis; agmatine biosynthesis; agmatine from L-arginine: step 1/1. In terms of biological role, specifically catalyzes the decarboxylation of L-arginine to agmatine. Has no S-adenosylmethionine decarboxylase (AdoMetDC) activity. The chain is Arginine decarboxylase proenzyme from Sulfolobus acidocaldarius (strain ATCC 33909 / DSM 639 / JCM 8929 / NBRC 15157 / NCIMB 11770).